The chain runs to 396 residues: 1-deoxy-D-xylulose 5-phosphate reductoisomerase (396 aa).

Threonine 10, glycine 11, serine 12, isoleucine 13, and asparagine 123 together coordinate NADPH. Lysine 124 is a 1-deoxy-D-xylulose 5-phosphate binding site. Glutamate 125 is a binding site for NADPH. Aspartate 149 is a binding site for Mn(2+). The 1-deoxy-D-xylulose 5-phosphate site is built by serine 150, glutamate 151, serine 185, and histidine 208. Glutamate 151 serves as a coordination point for Mn(2+). Glycine 214 serves as a coordination point for NADPH. Positions 221, 226, 227, and 230 each coordinate 1-deoxy-D-xylulose 5-phosphate. Residue glutamate 230 participates in Mn(2+) binding.

It belongs to the DXR family. Mg(2+) serves as cofactor. It depends on Mn(2+) as a cofactor.

The catalysed reaction is 2-C-methyl-D-erythritol 4-phosphate + NADP(+) = 1-deoxy-D-xylulose 5-phosphate + NADPH + H(+). Its pathway is isoprenoid biosynthesis; isopentenyl diphosphate biosynthesis via DXP pathway; isopentenyl diphosphate from 1-deoxy-D-xylulose 5-phosphate: step 1/6. Functionally, catalyzes the NADPH-dependent rearrangement and reduction of 1-deoxy-D-xylulose-5-phosphate (DXP) to 2-C-methyl-D-erythritol 4-phosphate (MEP). This is 1-deoxy-D-xylulose 5-phosphate reductoisomerase from Shewanella sp. (strain MR-4).